Reading from the N-terminus, the 258-residue chain is Imidazole glycerol phosphate synthase subunit HisF (258 aa).

Catalysis depends on residues aspartate 11 and aspartate 130.

Belongs to the HisA/HisF family. As to quaternary structure, heterodimer of HisH and HisF.

The protein resides in the cytoplasm. The catalysed reaction is 5-[(5-phospho-1-deoxy-D-ribulos-1-ylimino)methylamino]-1-(5-phospho-beta-D-ribosyl)imidazole-4-carboxamide + L-glutamine = D-erythro-1-(imidazol-4-yl)glycerol 3-phosphate + 5-amino-1-(5-phospho-beta-D-ribosyl)imidazole-4-carboxamide + L-glutamate + H(+). It functions in the pathway amino-acid biosynthesis; L-histidine biosynthesis; L-histidine from 5-phospho-alpha-D-ribose 1-diphosphate: step 5/9. IGPS catalyzes the conversion of PRFAR and glutamine to IGP, AICAR and glutamate. The HisF subunit catalyzes the cyclization activity that produces IGP and AICAR from PRFAR using the ammonia provided by the HisH subunit. This is Imidazole glycerol phosphate synthase subunit HisF from Nitrobacter hamburgensis (strain DSM 10229 / NCIMB 13809 / X14).